The following is a 104-amino-acid chain: Transcription elongation factor A protein-like 9 (104 aa).

The tract at residues 1–48 (MKPCQKMEGNLEKEDEPKPEEEPKPEEKPEEGQEPEEEEKSEETFRER) is disordered. A compositionally biased stretch (basic and acidic residues) spans 9 to 31 (GNLEKEDEPKPEEEPKPEEKPEE). The span at 32 to 41 (GQEPEEEEKS) shows a compositional bias: acidic residues.

It belongs to the TFS-II family. TFA subfamily.

Its subcellular location is the nucleus. May be involved in transcriptional regulation. This Mus musculus (Mouse) protein is Transcription elongation factor A protein-like 9 (Tceal9).